Consider the following 585-residue polypeptide: Protein FAM151A (585 aa).

A helical membrane pass occupies residues 14 to 34 (WVFASITCVSAVAIAAIVLAI).

Belongs to the menorin family.

It is found in the membrane. The sequence is that of Protein FAM151A (FAM151A) from Pongo abelii (Sumatran orangutan).